We begin with the raw amino-acid sequence, 254 residues long: Protein PET122, mitochondrial (254 aa).

A mitochondrion-targeting transit peptide spans 1–8; it reads MLTITKRL. An essential for PET122 function region spans residues 185–254; the sequence is QAAALALFGR…IKRRGFEINT (70 aa).

Its subcellular location is the mitochondrion inner membrane. Its function is as follows. Required for expression of the mitochondrial gene for cytochrome c oxidase subunit 3 (COX3). PET122 seems to work by directly interacting with the small ribosomal subunit to promote translation initiation on the COX3 mRNA. The protein is Protein PET122, mitochondrial (PET122) of Saccharomyces cerevisiae (strain ATCC 204508 / S288c) (Baker's yeast).